Here is a 290-residue protein sequence, read N- to C-terminus: NAD kinase (290 aa).

Asp-75 acts as the Proton acceptor in catalysis. Residues 75-76 (DG), 148-149 (NE), Asp-178, 189-194 (TAYNIS), and Gln-247 contribute to the NAD(+) site.

This sequence belongs to the NAD kinase family. A divalent metal cation is required as a cofactor.

The protein localises to the cytoplasm. The catalysed reaction is NAD(+) + ATP = ADP + NADP(+) + H(+). Its function is as follows. Involved in the regulation of the intracellular balance of NAD and NADP, and is a key enzyme in the biosynthesis of NADP. Catalyzes specifically the phosphorylation on 2'-hydroxyl of the adenosine moiety of NAD to yield NADP. In Wolinella succinogenes (strain ATCC 29543 / DSM 1740 / CCUG 13145 / JCM 31913 / LMG 7466 / NCTC 11488 / FDC 602W) (Vibrio succinogenes), this protein is NAD kinase.